The primary structure comprises 680 residues: DNA-directed RNA polymerase subunit beta' (680 aa).

Residues C69, C71, C87, and C90 each coordinate Zn(2+). Residues D489, D491, and D493 each contribute to the Mg(2+) site.

Belongs to the RNA polymerase beta' chain family. RpoC1 subfamily. In terms of assembly, in plastids the minimal PEP RNA polymerase catalytic core is composed of four subunits: alpha, beta, beta', and beta''. When a (nuclear-encoded) sigma factor is associated with the core the holoenzyme is formed, which can initiate transcription. Requires Mg(2+) as cofactor. It depends on Zn(2+) as a cofactor.

The protein localises to the plastid. Its subcellular location is the chloroplast. It carries out the reaction RNA(n) + a ribonucleoside 5'-triphosphate = RNA(n+1) + diphosphate. Functionally, DNA-dependent RNA polymerase catalyzes the transcription of DNA into RNA using the four ribonucleoside triphosphates as substrates. The protein is DNA-directed RNA polymerase subunit beta' of Aethionema cordifolium (Lebanon stonecress).